Reading from the N-terminus, the 352-residue chain is Protein RecA (352 aa).

67–74 (GPESSGKT) is a binding site for ATP.

It belongs to the RecA family.

The protein localises to the cytoplasm. In terms of biological role, can catalyze the hydrolysis of ATP in the presence of single-stranded DNA, the ATP-dependent uptake of single-stranded DNA by duplex DNA, and the ATP-dependent hybridization of homologous single-stranded DNAs. It interacts with LexA causing its activation and leading to its autocatalytic cleavage. The protein is Protein RecA of Aggregatibacter actinomycetemcomitans (Actinobacillus actinomycetemcomitans).